The sequence spans 601 residues: RNA polymerase II C-terminal domain phosphatase-like 5 (601 aa).

Residues 1–20 (MFVAKNLSPERESKRQKKEP) are disordered. Basic and acidic residues predominate over residues 8-20 (SPERESKRQKKEP). FCP1 homology domains lie at 84–259 (LNMK…TDES) and 381–553 (LNEK…DESE).

Expressed in roots, seedlings, hypocotyls, cotyledons, leaves, siliques and flowers.

It localises to the nucleus. The enzyme catalyses O-phospho-L-seryl-[protein] + H2O = L-seryl-[protein] + phosphate. The catalysed reaction is O-phospho-L-threonyl-[protein] + H2O = L-threonyl-[protein] + phosphate. Mediates the dephosphorylation of 'Ser-2' of the heptad repeats YSPTSPS in the C-terminal domain of the largest RNA polymerase II subunit (RPB1). This promotes the activity of RNA polymerase II. Positively regulates abscisic acid (ABA) and drought responses, including the regulation of specific genes expression. This chain is RNA polymerase II C-terminal domain phosphatase-like 5, found in Arabidopsis thaliana (Mouse-ear cress).